The chain runs to 413 residues: Palmitoyltransferase ZDHHC6 (413 aa).

At 1–24 the chain is on the cytoplasmic side; it reads MGIFCSVIKFENLQDLRRLCHWGP. A helical membrane pass occupies residues 25 to 45; it reads IIALGVIAICSTMAMIDSVLW. Residues 46 to 57 lie on the Lumenal side of the membrane; that stretch reads YWPLHTTGGSVN. A helical transmembrane segment spans residues 58 to 78; that stretch reads FIMLINWTVMILYNYFNAMFA. The Cytoplasmic segment spans residues 79–143; the sequence is GPGFVPRGWK…NCCGHQNHAS (65 aa). In terms of domain architecture, DHHC spans 99 to 149; it reads QYCKVCQAYKAPRSHHCRKCNRCVMKMDHHCPWINNCCGHQNHASFTLFLL. The active-site S-palmitoyl cysteine intermediate is the Cys-129. A helical membrane pass occupies residues 144 to 164; it reads FTLFLLLAPLGCTHAAFIFVM. Over 165-194 the chain is Lumenal; it reads TMYTQLYNRLSFGWNTVKIDMSAARRDPPP. The helical transmembrane segment at 195-215 threads the bilayer; sequence IVPFGLAAFAATLFALGLALG. Topologically, residues 216–413 are cytoplasmic; the sequence is TTIAVGMLFF…PAPEGEKKNR (198 aa). The 86-residue stretch at 313–398 folds into the SH3 domain; it reads VRSVRYKVIE…PRNCVEKCPC (86 aa). Residues Cys-328, Cys-329, and Cys-343 are each lipidated (S-palmitoyl cysteine). A Di-lysine motif motif is present at residues 410 to 413; that stretch reads KKNR.

Belongs to the DHHC palmitoyltransferase family. As to quaternary structure, homooligomerizes. Interacts with SELENOK. Post-translationally, palmitoylated at 3 different sites by ZDHHC16. The combination of the different palmitoylation events strongly affects the quaternary assembly of ZDHHC6, its localization, stability and function. Palmitoylation at Cys-328 accelerates the turnover of ZDHHC6. Depalmitoylated by LYPLA2.

It localises to the endoplasmic reticulum membrane. The enzyme catalyses L-cysteinyl-[protein] + hexadecanoyl-CoA = S-hexadecanoyl-L-cysteinyl-[protein] + CoA. It carries out the reaction L-cysteinyl-[protein] + octadecanoyl-CoA = S-octadecanoyl-L-cysteinyl-[protein] + CoA. In terms of biological role, endoplasmic reticulum palmitoyl acyltransferase that mediates palmitoylation of proteins such as AMFR, CALX, ITPR1 and TFRC. Palmitoylates calnexin (CALX), which is required for its association with the ribosome-translocon complex and efficient folding of glycosylated proteins. Mediates palmitoylation of AMFR, promoting AMFR distribution to the peripheral endoplasmic reticulum. Together with SELENOK, palmitoylates ITPR1 in immune cells, leading to regulate ITPR1 stability and function. Stearoyltransferase that mediates stearoylation of TFRC to inhibit TFRC-mediated activation of the JNK pathway and mitochondrial fragmentation. The chain is Palmitoyltransferase ZDHHC6 from Mus musculus (Mouse).